Here is a 199-residue protein sequence, read N- to C-terminus: Holliday junction branch migration complex subunit RuvA (199 aa).

Residues 1–62 (MIAYIKGLLA…EDGIQFFGFA (62 aa)) are domain I. A domain II region spans residues 63-141 (KEDEKECFLL…GMAAVEHSTL (79 aa)). Residues 142–152 (QQSVITTGSGD) are flexible linker. The domain III stretch occupies residues 152-199 (DEAVEALLALGYSQGEARDAVKKAQKSAPEEDLSALIKIALKELAPSR).

The protein belongs to the RuvA family. Homotetramer. Forms an RuvA(8)-RuvB(12)-Holliday junction (HJ) complex. HJ DNA is sandwiched between 2 RuvA tetramers; dsDNA enters through RuvA and exits via RuvB. An RuvB hexamer assembles on each DNA strand where it exits the tetramer. Each RuvB hexamer is contacted by two RuvA subunits (via domain III) on 2 adjacent RuvB subunits; this complex drives branch migration. In the full resolvosome a probable DNA-RuvA(4)-RuvB(12)-RuvC(2) complex forms which resolves the HJ.

It is found in the cytoplasm. Functionally, the RuvA-RuvB-RuvC complex processes Holliday junction (HJ) DNA during genetic recombination and DNA repair, while the RuvA-RuvB complex plays an important role in the rescue of blocked DNA replication forks via replication fork reversal (RFR). RuvA specifically binds to HJ cruciform DNA, conferring on it an open structure. The RuvB hexamer acts as an ATP-dependent pump, pulling dsDNA into and through the RuvAB complex. HJ branch migration allows RuvC to scan DNA until it finds its consensus sequence, where it cleaves and resolves the cruciform DNA. This is Holliday junction branch migration complex subunit RuvA from Desulforamulus reducens (strain ATCC BAA-1160 / DSM 100696 / MI-1) (Desulfotomaculum reducens).